The sequence spans 132 residues: Small ribosomal subunit protein uS11 (132 aa).

This sequence belongs to the universal ribosomal protein uS11 family. As to quaternary structure, part of the 30S ribosomal subunit. Interacts with proteins S7 and S18. Binds to IF-3.

Located on the platform of the 30S subunit, it bridges several disparate RNA helices of the 16S rRNA. Forms part of the Shine-Dalgarno cleft in the 70S ribosome. The polypeptide is Small ribosomal subunit protein uS11 (Dichelobacter nodosus (strain VCS1703A)).